Consider the following 271-residue polypeptide: Bifunctional protein FolD (271 aa).

Residues 154–156, threonine 181, and isoleucine 222 contribute to the NADP(+) site; that span reads GRS.

This sequence belongs to the tetrahydrofolate dehydrogenase/cyclohydrolase family. As to quaternary structure, homodimer.

It catalyses the reaction (6R)-5,10-methylene-5,6,7,8-tetrahydrofolate + NADP(+) = (6R)-5,10-methenyltetrahydrofolate + NADPH. It carries out the reaction (6R)-5,10-methenyltetrahydrofolate + H2O = (6R)-10-formyltetrahydrofolate + H(+). It participates in one-carbon metabolism; tetrahydrofolate interconversion. Functionally, catalyzes the oxidation of 5,10-methylenetetrahydrofolate to 5,10-methenyltetrahydrofolate and then the hydrolysis of 5,10-methenyltetrahydrofolate to 10-formyltetrahydrofolate. The protein is Bifunctional protein FolD of Thermosipho africanus (strain TCF52B).